Consider the following 193-residue polypeptide: Imidazoleglycerol-phosphate dehydratase (193 aa).

This sequence belongs to the imidazoleglycerol-phosphate dehydratase family.

The protein resides in the cytoplasm. The catalysed reaction is D-erythro-1-(imidazol-4-yl)glycerol 3-phosphate = 3-(imidazol-4-yl)-2-oxopropyl phosphate + H2O. Its pathway is amino-acid biosynthesis; L-histidine biosynthesis; L-histidine from 5-phospho-alpha-D-ribose 1-diphosphate: step 6/9. The protein is Imidazoleglycerol-phosphate dehydratase of Staphylococcus carnosus (strain TM300).